A 460-amino-acid chain; its full sequence is Chromosomal replication initiator protein DnaA (460 aa).

A domain I, interacts with DnaA modulators region spans residues 1–73; sequence MEISIDSLWS…ANVVQSILGH (73 aa). Residues 73–116 form a domain II region; that stretch reads HPVEIYITVAKGEEFEEIGGGGAWELPTTNSIYETPNQNRQPNT. A domain III, AAA+ region region spans residues 117 to 333; it reads ELNAKYVFSR…GALTRALAYI (217 aa). ATP is bound by residues Gly-161, Gly-163, Lys-164, and Thr-165. The domain IV, binds dsDNA stretch occupies residues 334–460; that stretch reads SIWGLPMTVA…MNSRSRKPSL (127 aa).

The protein belongs to the DnaA family. As to quaternary structure, oligomerizes as a right-handed, spiral filament on DNA at oriC.

It localises to the cytoplasm. Functionally, plays an essential role in the initiation and regulation of chromosomal replication. ATP-DnaA binds to the origin of replication (oriC) to initiate formation of the DNA replication initiation complex once per cell cycle. Binds the DnaA box (a 9 base pair repeat at the origin) and separates the double-stranded (ds)DNA. Forms a right-handed helical filament on oriC DNA; dsDNA binds to the exterior of the filament while single-stranded (ss)DNA is stabiized in the filament's interior. The ATP-DnaA-oriC complex binds and stabilizes one strand of the AT-rich DNA unwinding element (DUE), permitting loading of DNA polymerase. After initiation quickly degrades to an ADP-DnaA complex that is not apt for DNA replication. Binds acidic phospholipids. The protein is Chromosomal replication initiator protein DnaA of Trichormus variabilis (strain ATCC 29413 / PCC 7937) (Anabaena variabilis).